The sequence spans 190 residues: Protein GrpE (190 aa).

Residues 1–18 (MTETPNTSSEEIQTSEPS) show a composition bias toward polar residues. The tract at residues 1-21 (MTETPNTSSEEIQTSEPSPDN) is disordered.

Belongs to the GrpE family. In terms of assembly, homodimer.

The protein resides in the cytoplasm. Participates actively in the response to hyperosmotic and heat shock by preventing the aggregation of stress-denatured proteins, in association with DnaK and GrpE. It is the nucleotide exchange factor for DnaK and may function as a thermosensor. Unfolded proteins bind initially to DnaJ; upon interaction with the DnaJ-bound protein, DnaK hydrolyzes its bound ATP, resulting in the formation of a stable complex. GrpE releases ADP from DnaK; ATP binding to DnaK triggers the release of the substrate protein, thus completing the reaction cycle. Several rounds of ATP-dependent interactions between DnaJ, DnaK and GrpE are required for fully efficient folding. The polypeptide is Protein GrpE (Chlamydia trachomatis serovar A (strain ATCC VR-571B / DSM 19440 / HAR-13)).